The chain runs to 133 residues: Small ribosomal subunit protein uS8 (133 aa).

The disordered stretch occupies residues 1–32 (MANHDPISDMLTRIRNASEKRHESTKVPASRM). Positions 16–25 (NASEKRHEST) are enriched in basic and acidic residues.

This sequence belongs to the universal ribosomal protein uS8 family. Part of the 30S ribosomal subunit. Contacts proteins S5 and S12.

Functionally, one of the primary rRNA binding proteins, it binds directly to 16S rRNA central domain where it helps coordinate assembly of the platform of the 30S subunit. The protein is Small ribosomal subunit protein uS8 of Synechococcus sp. (strain CC9311).